Here is a 617-residue protein sequence, read N- to C-terminus: MSPQRDRINAFYKDNPHPKGSRIVINREHLMIDRPYVLLAVLFVMFLSLIGLLAIAGIRLHRAAIYTAEIHKSLSTNLDVTNSIEHQVKDVLTPLFKIIGDEVGLRTPQRFTDLVKFISDKIKFLNPDREYDFRDLTWCINPPERIKLDYDQYCADVAAEELMNALVNSTLLETRTTNQFLAVSKGNCSGPTTIRGQFSNMSLSLLDLYLGRGYNVSSIVTMTSQGMYGGTYLVEKPNLSSKRSELSQLSMYRVFEVGVIRNPGLGAPVFHMTNYLEQPVSNDLSNCMVALGELKLAALCHGEDSITIPYQGSGKGVSFQLVKLGVWKSPTDMQSWVPLSTDDPVIDRLYLSSHRGVIADNQAKWAVPTTRTDDKLRMETCFQQACKGKIQALCENPEWAPLKDNRIPSYGVLSVDLSLTVELKIKIASGFGPLITHGSGMDLYKSNHNNVYWLTIPPMKNLALGVINTLEWIPRFKVSPYLFNVPIKEAGEDCHAPTYLPAEVDGDVKLSSNLVILPGQDLQYVLATYDTSRVEHAVVYYVYSPSRSFSYFYPFRLPIKGVPIELQVECFTWDQKLWCRHFCVLADSESGGHITHSGMEGMGVSCTVTREDGTNRR.

The Intravirion portion of the chain corresponds to 1 to 37 (MSPQRDRINAFYKDNPHPKGSRIVINREHLMIDRPYV). Residues 1-154 (MSPQRDRINA…RIKLDYDQYC (154 aa)) are stalk. The helical; Signal-anchor for type II membrane protein transmembrane segment at 38–58 (LLAVLFVMFLSLIGLLAIAGI) threads the bilayer. Residues 59–617 (RLHRAAIYTA…VTREDGTNRR (559 aa)) are Virion surface-facing. N-linked (GlcNAc...) asparagine; by host glycans are attached at residues Asn-168, Asn-187, Asn-200, Asn-215, and Asn-238. 5 disulfides stabilise this stretch: Cys-188-Cys-606, Cys-287-Cys-300, Cys-381-Cys-494, Cys-386-Cys-394, and Cys-570-Cys-579. Positions 458–543 (PMKNLALGVI…VEHAVVYYVY (86 aa)) are interaction with host NECTIN4 receptor.

It belongs to the paramyxoviruses hemagglutinin-neuraminidase family. Non-sialidase subfamily. As to quaternary structure, homodimer; disulfide-linked. Further forms homotetramer (dimer of dimers). Interacts (via C-terminus) with human NECTIN4 (via N-terminus); this interaction allows attachment to the respiratory epithelium and viral entry. Interacts (via C-terminus) with human SLAMF1/CD150 (via N-terminus); this interaction allows attachment and viral entry into the CD150-expressing immune cells. Interacts with human CD46 antigen (via N-terminus); this interaction allows attachment and viral entry of vaccine and laboratory-adapted strains.

It localises to the virion membrane. Its subcellular location is the host cell membrane. In terms of biological role, attaches the virus to the human SLAMF1/CD150 receptor for entry into host dendritic cells, macrophages, activated memory T cells and naive or memory B cells, thereby explaining the long immunosuppression that follows infection. In the respiratory airways, binds to the NECTIN4 receptor for entry into the host cell. Binding of H protein to the receptor induces a conformational change that allows the F protein to trigger virion/cell membranes fusion. The vaccine and laboratory-adapted strains use host CD46 as an alternate receptor. The high degree of interaction between H and CD46 results in down-regulation of the latter from the surface of infected cells, rendering them more sensitive to c3b-mediated complement lysis. The protein is Hemagglutinin glycoprotein (H) of Measles virus (strain Edmonston) (MeV).